The following is a 376-amino-acid chain: Alcohol dehydrogenase 1 (376 aa).

An N-acetylserine modification is found at Ser2. The Zn(2+) site is built by Cys47, His68, Cys98, Cys101, Cys104, Cys112, and Cys176. NAD(+)-binding positions include 201–206 (GLGGVG), Asp225, Lys230, 294–296 (VGV), and Arg371.

This sequence belongs to the zinc-containing alcohol dehydrogenase family. Class-I subfamily. In terms of assembly, homodimer. It depends on Zn(2+) as a cofactor.

The protein localises to the cytoplasm. It carries out the reaction a primary alcohol + NAD(+) = an aldehyde + NADH + H(+). The enzyme catalyses a secondary alcohol + NAD(+) = a ketone + NADH + H(+). This is Alcohol dehydrogenase 1 (ADH1) from Gallus gallus (Chicken).